A 478-amino-acid chain; its full sequence is Solute carrier family 7 member 13 (478 aa).

Residues 1-14 (MAMDSKKEIRLKRE) lie on the Cytoplasmic side of the membrane. Residues 15 to 35 (LGYFWGTNFLIINIIGAGIFV) traverse the membrane as a helical segment. At 36-47 (SPKGVLQHSSMN) the chain is on the extracellular side. A helical transmembrane segment spans residues 48 to 68 (VGVSLCVWAVCAVLTLTSALC). The Cytoplasmic segment spans residues 69–89 (SAEIGITFPYSGAHYYFLKRC). The helical transmembrane segment at 90–110 (FGPLVAFLRLWTSLFLGPGLI) threads the bilayer. At 111–129 (ASQALLLAEYGVQPFYPSC) the chain is on the extracellular side. Residues 130-150 (SAPILPRKCLALAMLWIVGIL) traverse the membrane as a helical segment. Over 151–163 (NSRGVKELSWLQT) the chain is Cytoplasmic. A helical transmembrane segment spans residues 164 to 184 (VSSVLKVGILGVISLSGLFLL). The Extracellular portion of the chain corresponds to 185–208 (VRGKKENVQRLQNAFDAEFPEVSQ). The helical transmembrane segment at 209-229 (LIEAIFQGYFAFSGGGCFTCI) threads the bilayer. Over 230–242 (AGELKKPSKTIPR) the chain is Cytoplasmic. A helical membrane pass occupies residues 243 to 263 (CIFTGLPLVTVVYLLANISYL). At 264–288 (TVLTPQEMLSSDAVALTWTDRVIPQ) the chain is on the extracellular side. The chain crosses the membrane as a helical span at residues 289 to 309 (FTWTVPFAISASLFINLVINV). Over 310–338 (LETSRVLYIASENGQLPLLFCALNVHSSP) the chain is Cytoplasmic. The helical transmembrane segment at 339–359 (FIAVLLIISMASILIVLTNLI) threads the bilayer. Asp-360 is a topological domain (extracellular). Residues 361 to 381 (LINYLYFVVSIWTALSIIGIL) form a helical membrane-spanning segment. Residues 382–395 (KLRYQEPNLHRPYK) are Cytoplasmic-facing. A helical membrane pass occupies residues 396-416 (VFLPFTFIALGITLSLVLIPL). Over 417–423 (VKSPKLH) the chain is Extracellular. Residues 424 to 444 (YIYVFLFLLSGLVFYVPLIHF) traverse the membrane as a helical segment. Residues 445–478 (KVKFVWFQKLTCYLQLLFNICIPDVSDDHIHEES) are Cytoplasmic-facing.

Belongs to the amino acid-polyamine-organocation (APC) superfamily. Disulfide-linked heterodimer composed of the catalytic light subunit SLC7A13 and the heavy subunit SLC3A1. In terms of tissue distribution, expressed in renal tubules in the outer stripe of the outer medulla and medullary ray (at protein level). Detected in male but not in female kidney.

It localises to the apical cell membrane. The enzyme catalyses L-cystine(out) + L-aspartate(in) = L-cystine(in) + L-aspartate(out). It carries out the reaction L-cystine(out) = L-cystine(in). It catalyses the reaction L-aspartate(in) + L-glutamate(out) = L-aspartate(out) + L-glutamate(in). The catalysed reaction is L-aspartate(in) + L-glutamine(out) = L-aspartate(out) + L-glutamine(in). The enzyme catalyses L-aspartate(in) + L-methionine(out) = L-aspartate(out) + L-methionine(in). It carries out the reaction L-leucine(out) + L-aspartate(in) = L-leucine(in) + L-aspartate(out). It catalyses the reaction L-valine(out) + L-aspartate(in) = L-valine(in) + L-aspartate(out). The catalysed reaction is L-aspartate(in) + L-phenylalanine(out) = L-aspartate(out) + L-phenylalanine(in). The enzyme catalyses L-tyrosine(out) + L-aspartate(in) = L-tyrosine(in) + L-aspartate(out). It carries out the reaction L-tryptophan(out) + L-aspartate(in) = L-tryptophan(in) + L-aspartate(out). Associates with SLC3A1/rBAT to form a functional heterodimeric complex that transports anionic and neutral amino acids across the apical plasma membrane of renal epithelium. Preferentially mediates exchange transport, but can also operate via facilitated diffusion. May act as a major transporter for L-cystine in late proximal tubules, ensuring its reabsorption from the luminal fluid in exchange for cytosolic L-glutamate or L-aspartate. This chain is Solute carrier family 7 member 13, found in Mus musculus (Mouse).